The primary structure comprises 740 residues: Phosphoribosylformylglycinamidine synthase subunit PurL (740 aa).

Residue His55 is part of the active site. Positions 58 and 97 each coordinate ATP. Glu99 contributes to the Mg(2+) binding site. Substrate contacts are provided by residues 100-103 (SHNH) and Arg122. The active-site Proton acceptor is the His101. Residue Asp123 coordinates Mg(2+). Gln246 provides a ligand contact to substrate. Mg(2+) is bound at residue Asp276. 320 to 322 (ESQ) is a binding site for substrate. ATP is bound by residues Asp501 and Gly538. Asn539 is a binding site for Mg(2+). A substrate-binding site is contributed by Ser541.

Belongs to the FGAMS family. Monomer. Part of the FGAM synthase complex composed of 1 PurL, 1 PurQ and 2 PurS subunits.

Its subcellular location is the cytoplasm. It carries out the reaction N(2)-formyl-N(1)-(5-phospho-beta-D-ribosyl)glycinamide + L-glutamine + ATP + H2O = 2-formamido-N(1)-(5-O-phospho-beta-D-ribosyl)acetamidine + L-glutamate + ADP + phosphate + H(+). The protein operates within purine metabolism; IMP biosynthesis via de novo pathway; 5-amino-1-(5-phospho-D-ribosyl)imidazole from N(2)-formyl-N(1)-(5-phospho-D-ribosyl)glycinamide: step 1/2. Functionally, part of the phosphoribosylformylglycinamidine synthase complex involved in the purines biosynthetic pathway. Catalyzes the ATP-dependent conversion of formylglycinamide ribonucleotide (FGAR) and glutamine to yield formylglycinamidine ribonucleotide (FGAM) and glutamate. The FGAM synthase complex is composed of three subunits. PurQ produces an ammonia molecule by converting glutamine to glutamate. PurL transfers the ammonia molecule to FGAR to form FGAM in an ATP-dependent manner. PurS interacts with PurQ and PurL and is thought to assist in the transfer of the ammonia molecule from PurQ to PurL. The protein is Phosphoribosylformylglycinamidine synthase subunit PurL of Lacticaseibacillus casei (Lactobacillus casei).